The following is a 255-amino-acid chain: uncharacterized protein (255 aa).

A signal peptide spans 1–23; that stretch reads MKRLNKLVLGISFLFLVISITAG. A lipid anchor (N-palmitoyl cysteine) is attached at cysteine 24. Cysteine 24 carries S-diacylglycerol cysteine lipidation.

This sequence belongs to the staphylococcal tandem lipoprotein family.

It is found in the cell membrane. This is an uncharacterized protein from Staphylococcus aureus (strain N315).